Consider the following 559-residue polypeptide: Dihydroxy-acid dehydratase (559 aa).

Cys49 lines the [2Fe-2S] cluster pocket. Asp81 provides a ligand contact to Mg(2+). Position 122 (Cys122) interacts with [2Fe-2S] cluster. Mg(2+) contacts are provided by Asp123 and Lys124. N6-carboxylysine is present on Lys124. Cys194 provides a ligand contact to [2Fe-2S] cluster. Glu446 contacts Mg(2+). Residue Ser472 is the Proton acceptor of the active site.

The protein belongs to the IlvD/Edd family. Homodimer. It depends on [2Fe-2S] cluster as a cofactor. Mg(2+) is required as a cofactor.

It catalyses the reaction (2R)-2,3-dihydroxy-3-methylbutanoate = 3-methyl-2-oxobutanoate + H2O. It carries out the reaction (2R,3R)-2,3-dihydroxy-3-methylpentanoate = (S)-3-methyl-2-oxopentanoate + H2O. It participates in amino-acid biosynthesis; L-isoleucine biosynthesis; L-isoleucine from 2-oxobutanoate: step 3/4. The protein operates within amino-acid biosynthesis; L-valine biosynthesis; L-valine from pyruvate: step 3/4. In terms of biological role, functions in the biosynthesis of branched-chain amino acids. Catalyzes the dehydration of (2R,3R)-2,3-dihydroxy-3-methylpentanoate (2,3-dihydroxy-3-methylvalerate) into 2-oxo-3-methylpentanoate (2-oxo-3-methylvalerate) and of (2R)-2,3-dihydroxy-3-methylbutanoate (2,3-dihydroxyisovalerate) into 2-oxo-3-methylbutanoate (2-oxoisovalerate), the penultimate precursor to L-isoleucine and L-valine, respectively. This Prochlorococcus marinus (strain MIT 9515) protein is Dihydroxy-acid dehydratase.